The following is a 79-amino-acid chain: Beta-defensin 15 (79 aa).

The signal sequence occupies residues 1 to 20; it reads MKTFLFLFAVFFFLDPAKNA. Disulfide bonds link cysteine 26/cysteine 53, cysteine 33/cysteine 47, and cysteine 37/cysteine 54.

The protein belongs to the beta-defensin family.

The protein localises to the secreted. Its function is as follows. Has antibacterial activity. The sequence is that of Beta-defensin 15 (Defb15) from Rattus norvegicus (Rat).